The sequence spans 405 residues: Cystathionine gamma-lyase (405 aa).

3 residues coordinate substrate: R62, Y114, and R119. K212 bears the N6-(pyridoxal phosphate)lysine mark. E339 is a substrate binding site.

It belongs to the trans-sulfuration enzymes family. Homotetramer. Interacts with CALM in a calcium-dependent manner. Pyridoxal 5'-phosphate is required as a cofactor.

It is found in the cytoplasm. The catalysed reaction is L,L-cystathionine + H2O = 2-oxobutanoate + L-cysteine + NH4(+). The enzyme catalyses L-cysteine + H2O = hydrogen sulfide + pyruvate + NH4(+) + H(+). It catalyses the reaction L-homocysteine + H2O = 2-oxobutanoate + hydrogen sulfide + NH4(+) + H(+). It carries out the reaction L-homoserine = 2-oxobutanoate + NH4(+). The catalysed reaction is L-selenocystathionine + H2O = L-selenocysteine + 2-oxobutanoate + NH4(+). The protein operates within amino-acid biosynthesis; L-cysteine biosynthesis; L-cysteine from L-homocysteine and L-serine: step 2/2. Catalyzes the last step in the trans-sulfuration pathway from L-methionine to L-cysteine in a pyridoxal-5'-phosphate (PLP)-dependent manner, which consists on cleaving the L,L-cystathionine molecule into L-cysteine, ammonia and 2-oxobutanoate. Part of the L-cysteine derived from the trans-sulfuration pathway is utilized for biosynthesis of the ubiquitous antioxidant glutathione. Besides its role in the conversion of L-cystathionine into L-cysteine, it utilizes L-cysteine and L-homocysteine as substrates (at much lower rates than L,L-cystathionine) to produce hydrogen sulfide (H2S). In vitro, it converts two L-cysteine molecules into lanthionine and H2S, and two L-homocysteine molecules to homolanthionine and H2S, which can be particularly relevant under conditions of severe hyperhomocysteinemia. Lanthionine and homolanthionine are structural homologs of L,L-cystathionine that differ by the absence or presence of an extra methylene group, respectively. Acts as a cysteine-protein sulfhydrase by mediating sulfhydration of target proteins: sulfhydration consists of converting -SH groups into -SSH on specific cysteine residues of target proteins such as GAPDH, PTPN1 and NF-kappa-B subunit RELA, thereby regulating their function. By generating the gasotransmitter H2S, it participates in a number of physiological processes such as vasodilation, bone protection, and inflammation. Plays an essential role in myogenesis by contributing to the biogenesis of H2S in skeletal muscle tissue. Can also accept homoserine as substrate. Catalyzes the elimination of selenocystathionine (which can be derived from the diet) to yield selenocysteine, ammonia and 2-oxobutanoate. In Macaca fascicularis (Crab-eating macaque), this protein is Cystathionine gamma-lyase (CTH).